A 197-amino-acid polypeptide reads, in one-letter code: Adrenodoxin-like protein 2, mitochondrial (197 aa).

A mitochondrion-targeting transit peptide spans 1–74 (MVFHRLSRLG…TSFSTTSEKG (74 aa)). Residues 81 to 184 (INVTFVDKDG…GVRLAIPSAT (104 aa)) enclose the 2Fe-2S ferredoxin-type domain. Residues C118, C124, C127, and C165 each coordinate [2Fe-2S] cluster.

The protein belongs to the adrenodoxin/putidaredoxin family. The cofactor is [2Fe-2S] cluster.

It localises to the mitochondrion. Functionally, associates with the adrenodoxin reductase MFDR to form an efficient low potential electron transfer chain that is able to reduce cytochrome C. This Arabidopsis thaliana (Mouse-ear cress) protein is Adrenodoxin-like protein 2, mitochondrial.